The primary structure comprises 509 residues: MKVSVTKNTIQSLKLDAVAFPISKSEKDNALKEVAAKTGVTVALFEKDFSADESSLMMLYPDLELCAFKRVFLVGLGDKPGLDACRSAMASLAKKVKELKLATVGVDLSGAKALSETANDSVDYIAQTAVEGFHSGLYDFNQLKTNRVKELKSGKSEDDEPKQAVEELVLATDAKILSDVKKGAETGDIIATSQAMVRDLVNSPSNYMTALDFAERVKASGEKHGFKVTVFDKAKIEELKMGGLLGVNKGSVIPPTFSIMEYKPEGESLGRVALVGKGVMFDTGGISIKPSSGMGDMKADMAGGADVLGAVEAAARLKLPLEVIGIVPATDNMPSGSAQNPGDVLTTYSGITVEVDNTDAEGRLILADALTYVKETYNPDTIIDLATLTGACIVALGETTAGLFSNNDELAEKLYKAGQRAGEKVWRMPIWDEYDKLIKSNVADVKNVGGRSAGSITAAKFLEKFVGDHSSWAHLDIAGPAFPGMTNGGGSGSTGFGVRLLVELMRNWK.

The Mn(2+) site is built by Lys-277 and Asp-282. Residue Lys-289 is part of the active site. Residues Asp-300, Asp-359, and Glu-361 each coordinate Mn(2+). Residue Arg-363 is part of the active site.

The protein belongs to the peptidase M17 family. It depends on Mn(2+) as a cofactor.

The protein resides in the cytoplasm. It catalyses the reaction Release of an N-terminal amino acid, Xaa-|-Yaa-, in which Xaa is preferably Leu, but may be other amino acids including Pro although not Arg or Lys, and Yaa may be Pro. Amino acid amides and methyl esters are also readily hydrolyzed, but rates on arylamides are exceedingly low.. The catalysed reaction is Release of an N-terminal amino acid, preferentially leucine, but not glutamic or aspartic acids.. In terms of biological role, presumably involved in the processing and regular turnover of intracellular proteins. Catalyzes the removal of unsubstituted N-terminal amino acids from various peptides. The polypeptide is Probable cytosol aminopeptidase (Chloroherpeton thalassium (strain ATCC 35110 / GB-78)).